The chain runs to 449 residues: C4-dicarboxylate transport protein (449 aa).

8 helical membrane passes run 18 to 38 (PFYL…ALLG), 61 to 81 (MIIS…VAHV), 93 to 113 (VYFL…AHVV), 159 to 179 (FVGD…IALA), 202 to 222 (LVQM…AFTI), 244 to 264 (SLLF…FSIL), 346 to 366 (LFLV…AGFI), and 369 to 389 (AATL…ILGV).

It belongs to the dicarboxylate/amino acid:cation symporter (DAACS) (TC 2.A.23) family.

It localises to the cell inner membrane. Responsible for the transport of dicarboxylates such as succinate, fumarate, and malate from the periplasm across the membrane. The polypeptide is C4-dicarboxylate transport protein (Xylella fastidiosa (strain M23)).